A 67-amino-acid polypeptide reads, in one-letter code: uncharacterized protein (67 aa).

This is an uncharacterized protein from Vaccinia virus (strain Copenhagen) (VACV).